The primary structure comprises 311 residues: Taste receptor type 2 member 9 (311 aa).

Residues 1-9 lie on the Extracellular side of the membrane; it reads MPSTIEAIY. The helical transmembrane segment at 10 to 32 threads the bilayer; sequence IILIAGELTIGIWGNGFIVLVNC. The Cytoplasmic portion of the chain corresponds to 33–52; the sequence is IDWLKRRDVSLIDIILISLA. The helical transmembrane segment at 53–72 threads the bilayer; that stretch reads ISRICLLCVISLDGFFILLF. The Extracellular segment spans residues 73-86; the sequence is PGTYDTNVLESIMD. The chain crosses the membrane as a helical span at residues 87 to 109; it reads AVWTFANNSSLWFTSCLSIFYLL. The Cytoplasmic segment spans residues 110–128; that stretch reads KIANISHPFFFWLKLKINK. Residues 129 to 146 form a helical membrane-spanning segment; it reads VILAILLGSFLISLIISF. The Extracellular segment spans residues 147-179; sequence PINGMWYNLFKVSHEENITWAFKVSTIPGAFKQ. Asparagine 163 carries an N-linked (GlcNAc...) asparagine glycan. A helical transmembrane segment spans residues 180–202; the sequence is LTLNLGAMVPFILCLISFFLLLF. Residues 203 to 233 lie on the Cytoplasmic side of the membrane; that stretch reads SLVRHTKQIQLHATGFRDPSTEAHMRAVKAV. A helical membrane pass occupies residues 234–256; the sequence is IIFLLLLILYYPVFLVMTSSTLI. At 257–260 the chain is on the extracellular side; it reads PQGK. The chain crosses the membrane as a helical span at residues 261 to 283; that stretch reads LVLMIGDIVTVIFPSSHSFILIM. The Cytoplasmic portion of the chain corresponds to 284–311; that stretch reads GNSKLRAAFLKMLRFVKGFLRRRKPFVP.

It belongs to the G-protein coupled receptor T2R family.

It is found in the membrane. Gustducin-coupled receptor implicated in the perception of bitter compounds in the oral cavity and the gastrointestinal tract. Signals through PLCB2 and the calcium-regulated cation channel TRPM5. The chain is Taste receptor type 2 member 9 (TAS2R9) from Macaca mulatta (Rhesus macaque).